A 501-amino-acid chain; its full sequence is Protein anon-37Cs (501 aa).

Its subcellular location is the cytoplasm. In terms of biological role, has a non-vital function. The sequence is that of Protein anon-37Cs (anon-37Cs) from Drosophila simulans (Fruit fly).